The following is a 653-amino-acid chain: Exocyst complex component 7 (653 aa).

The segment at 1 to 384 is SEC8 and ARHQ binding; sequence MIPPQEASAR…TKNKLPGLIT (384 aa). 2 coiled-coil regions span residues 5 to 42 and 63 to 85; these read QEAS…TKNM and VHKQ…SCLD. Ser133 carries the post-translational modification Phosphoserine. The tract at residues 238–272 is disordered; sequence FRKSSSSSGVPYSPAIPNKRKDTPTKKPIKRPGRD.

This sequence belongs to the EXO70 family. In terms of assembly, the exocyst complex is composed of EXOC1, EXOC2, EXOC3, EXOC4, EXOC5, EXOC6, EXOC7 and EXOC8. Interacts with ARHQ in a GTP-dependent manner. Interacts with RAB11FIP3.

Its subcellular location is the cytoplasm. The protein localises to the cytosol. It is found in the cell membrane. It localises to the midbody. The protein resides in the midbody ring. Component of the exocyst complex involved in the docking of exocytic vesicles with fusion sites on the plasma membrane. In adipocytes, plays a crucial role in targeting SLC2A4 vesicle to the plasma membrane in response to insulin, perhaps directing the vesicle to the precise site of fusion. It is required for neuron survival and plays an essential role in cortical development. This chain is Exocyst complex component 7 (Exoc7), found in Rattus norvegicus (Rat).